The sequence spans 191 residues: NAD(P)H dehydrogenase (quinone) (191 aa).

Residues 4–184 (ILVIFHSITG…VAKMLGKRVA (181 aa)) form the Flavodoxin-like domain. Residues 10–15 (SITGNT), 83–85 (TRF), and 118–124 (SNEMPHG) each bind FMN.

It belongs to the WrbA family. As to quaternary structure, homodimer and homotetramer; in equilibrium. Requires FMN as cofactor.

The enzyme catalyses a quinone + NADH + H(+) = a quinol + NAD(+). The catalysed reaction is a quinone + NADPH + H(+) = a quinol + NADP(+). In terms of biological role, it seems to function in response to environmental stress when various electron transfer chains are affected or when the environment is highly oxidizing. It reduces quinones to the hydroquinone state to prevent interaction of the semiquinone with O2 and production of superoxide. It prefers NADH over NADPH. This chain is NAD(P)H dehydrogenase (quinone), found in Archaeoglobus fulgidus (strain ATCC 49558 / DSM 4304 / JCM 9628 / NBRC 100126 / VC-16).